Reading from the N-terminus, the 74-residue chain is Protein sok (74 aa).

Residues 26-45 (TQHGNKPPSRHEAESLKRRA) form a disordered region.

This chain is Protein sok (sok), found in Escherichia coli.